A 203-amino-acid polypeptide reads, in one-letter code: Holliday junction branch migration complex subunit RuvA (203 aa).

Positions 1–64 (MIGRLRGIIL…EDAQLLYGFN (64 aa)) are domain I. Residues 65–142 (NKQERTLFKE…KGLHGDLFTP (78 aa)) form a domain II region. The flexible linker stretch occupies residues 143–154 (AADLVLTSPAGP). The domain III stretch occupies residues 155–203 (TADDAEQEAVAALVALGYKPQEASRMVSKIARPDANSETLIREALRAAL).

It belongs to the RuvA family. Homotetramer. Forms an RuvA(8)-RuvB(12)-Holliday junction (HJ) complex. HJ DNA is sandwiched between 2 RuvA tetramers; dsDNA enters through RuvA and exits via RuvB. An RuvB hexamer assembles on each DNA strand where it exits the tetramer. Each RuvB hexamer is contacted by two RuvA subunits (via domain III) on 2 adjacent RuvB subunits; this complex drives branch migration. In the full resolvosome a probable DNA-RuvA(4)-RuvB(12)-RuvC(2) complex forms which resolves the HJ.

The protein localises to the cytoplasm. Functionally, the RuvA-RuvB-RuvC complex processes Holliday junction (HJ) DNA during genetic recombination and DNA repair, while the RuvA-RuvB complex plays an important role in the rescue of blocked DNA replication forks via replication fork reversal (RFR). RuvA specifically binds to HJ cruciform DNA, conferring on it an open structure. The RuvB hexamer acts as an ATP-dependent pump, pulling dsDNA into and through the RuvAB complex. HJ branch migration allows RuvC to scan DNA until it finds its consensus sequence, where it cleaves and resolves the cruciform DNA. The polypeptide is Holliday junction branch migration complex subunit RuvA (Klebsiella pneumoniae (strain 342)).